A 416-amino-acid polypeptide reads, in one-letter code: Glutamyl-tRNA reductase (416 aa).

Substrate is bound by residues 46–49 (TCNR), Ser-97, 102–104 (DHE), and Gln-108. Cys-47 acts as the Nucleophile in catalysis. Position 178-183 (178-183 (GAGMAA)) interacts with NADP(+).

Belongs to the glutamyl-tRNA reductase family. As to quaternary structure, homodimer.

It catalyses the reaction (S)-4-amino-5-oxopentanoate + tRNA(Glu) + NADP(+) = L-glutamyl-tRNA(Glu) + NADPH + H(+). The protein operates within porphyrin-containing compound metabolism; protoporphyrin-IX biosynthesis; 5-aminolevulinate from L-glutamyl-tRNA(Glu): step 1/2. In terms of biological role, catalyzes the NADPH-dependent reduction of glutamyl-tRNA(Glu) to glutamate 1-semialdehyde (GSA). The chain is Glutamyl-tRNA reductase from Aeropyrum pernix (strain ATCC 700893 / DSM 11879 / JCM 9820 / NBRC 100138 / K1).